Reading from the N-terminus, the 135-residue chain is Large ribosomal subunit protein uL16 (135 aa).

Belongs to the universal ribosomal protein uL16 family. In terms of assembly, part of the 50S ribosomal subunit.

Its function is as follows. Binds 23S rRNA and is also seen to make contacts with the A and possibly P site tRNAs. The sequence is that of Large ribosomal subunit protein uL16 from Bdellovibrio bacteriovorus (strain ATCC 15356 / DSM 50701 / NCIMB 9529 / HD100).